The sequence spans 404 residues: Argininosuccinate synthase (404 aa).

Residues 12–20 (AYSGGLDTS) and alanine 39 each bind ATP. L-citrulline is bound by residues tyrosine 91 and serine 96. Residue glycine 121 coordinates ATP. L-aspartate contacts are provided by threonine 123, asparagine 127, and aspartate 128. Asparagine 127 is an L-citrulline binding site. Residues arginine 131, serine 180, serine 189, glutamate 265, and tyrosine 277 each contribute to the L-citrulline site.

The protein belongs to the argininosuccinate synthase family. Type 1 subfamily. Homotetramer.

The protein localises to the cytoplasm. The catalysed reaction is L-citrulline + L-aspartate + ATP = 2-(N(omega)-L-arginino)succinate + AMP + diphosphate + H(+). Its pathway is amino-acid biosynthesis; L-arginine biosynthesis; L-arginine from L-ornithine and carbamoyl phosphate: step 2/3. The sequence is that of Argininosuccinate synthase from Vibrio cholerae serotype O1 (strain ATCC 39541 / Classical Ogawa 395 / O395).